Consider the following 428-residue polypeptide: Enolase (428 aa).

Gln-165 contributes to the (2R)-2-phosphoglycerate binding site. Glu-207 (proton donor) is an active-site residue. The Mg(2+) site is built by Asp-244, Glu-283, and Asp-310. (2R)-2-phosphoglycerate is bound by residues Lys-335, Arg-364, Ser-365, and Lys-386. Lys-335 functions as the Proton acceptor in the catalytic mechanism.

Belongs to the enolase family. Requires Mg(2+) as cofactor.

It localises to the cytoplasm. Its subcellular location is the secreted. The protein localises to the cell surface. The enzyme catalyses (2R)-2-phosphoglycerate = phosphoenolpyruvate + H2O. It functions in the pathway carbohydrate degradation; glycolysis; pyruvate from D-glyceraldehyde 3-phosphate: step 4/5. Functionally, catalyzes the reversible conversion of 2-phosphoglycerate (2-PG) into phosphoenolpyruvate (PEP). It is essential for the degradation of carbohydrates via glycolysis. The polypeptide is Enolase (Chlamydia pneumoniae (Chlamydophila pneumoniae)).